The sequence spans 548 residues: SH2/SH3 adapter protein dreadlocks (548 aa).

3 disordered regions span residues 12-37, 57-92, and 113-146; these read IPDS…QHQN, QVPV…TASS, and GSGS…MKHG. The segment covering 20–37 has biased composition (low complexity); that stretch reads QQYPQQQQHPPQLPQHQN. Gly residues predominate over residues 113 to 122; the sequence is GSGSANGSGS. Residues 123-135 show a composition bias toward low complexity; the sequence is GNSSSGSAAGNAG. Residues 150–209 enclose the SH3 1 domain; it reads DDVCYVVAKYDYAAQGAQELDLRKNERYLLLDDSKHWWRVQNSRNQSGYVPSNYVKKEKP. The tract at residues 219-247 is disordered; the sequence is VKKGSGSKTLPNCSPSRQVESPTMSRRLP. A compositionally biased stretch (polar residues) spans 227–242; that stretch reads TLPNCSPSRQVESPTM. SH3 domains follow at residues 252–311 and 324–386; these read EAIG…EDCD and NVLD…ELND. The disordered stretch occupies residues 398 to 442; that stretch reads SAGNGNGGGSNGGAGGGGGNDSMERRNEGNKPAAQSSGQPIERPN. Residues 401–417 show a composition bias toward gly residues; the sequence is NGNGGGSNGGAGGGGGN. Residues 448-542 form the SH2 domain; that stretch reads WYYGAITRSQ…GEKLYLVRSL (95 aa).

As to quaternary structure, interacts (via SH2 and SH3 domains) with Dscam1 (via cytoplasmic domain); the interaction is direct and requires Dscam1 to be phosphorylated. Interacts (via SH2 and SH3 domains) with InR/Insulin-like receptor (via C-terminal cytoplasmic region); the interaction requires InR kinase activity, probably for autophosphorylation stimulated by insulin signaling. Interacts with Ptp61F (via C-terminus); this interaction is independent of insulin stimulation. Interacts (via SH3 domain 2) with Pak (via N-terminal PXXP motif). Phosphorylated by Src42A and possibly by other tyrosine kinases. Constitutively dephosphorylated by its binding partner Ptp61F.

The protein localises to the perikaryon. The protein resides in the cell projection. It is found in the axon. Its subcellular location is the growth cone. Adapter protein that links cell surface receptor tyrosine phosphorylation to downstream signaling pathways and effectors, many of which are involved in regulation of the actin cytoskeleton. Recruited by Dscam1/Down syndrome cell adhesion molecule homolog and InR/insulin-like receptor. Recruits Pak to membranes, probably when dock/dreadlocks is associated with activated receptors. Required for guidance and targeting of photoreceptor (R cell) axon projections but not for axon outgrowth, differentiation or target induction in the developing eye. As part of a signaling pathway that involves the lbm/late bloomer protein, involved in synapse formation of the RP3 motorneuron at the muscle 7/6 cleft, probably by stimulating axon defasciculation from other SNb neurons. The chain is SH2/SH3 adapter protein dreadlocks from Drosophila melanogaster (Fruit fly).